A 101-amino-acid chain; its full sequence is EAPCGDTSGFEQVRLADLPPEATDTYELIEKGGPYPYPEDGTVFENREGILPDCAEGYYHEYTVKTPSGDDRGARRFVVGDGGEYFYTEDHYESFRLTIVN.

Residues C4 and C54 are joined by a disulfide bond. Residue E61 is the Proton acceptor of the active site. Catalysis depends on H91, which acts as the Proton donor.

The protein belongs to the ribonuclease N1/T1 family.

The catalysed reaction is [RNA] containing guanosine + H2O = an [RNA fragment]-3'-guanosine-3'-phosphate + a 5'-hydroxy-ribonucleotide-3'-[RNA fragment].. This is Guanyl-specific ribonuclease St from Saccharopolyspora erythraea (Streptomyces erythraeus).